Reading from the N-terminus, the 1379-residue chain is DNA-directed RNA polymerase subunit beta (1379 aa).

Belongs to the RNA polymerase beta chain family. The RNAP catalytic core consists of 2 alpha, 1 beta, 1 beta' and 1 omega subunit. When a sigma factor is associated with the core the holoenzyme is formed, which can initiate transcription.

The catalysed reaction is RNA(n) + a ribonucleoside 5'-triphosphate = RNA(n+1) + diphosphate. DNA-dependent RNA polymerase catalyzes the transcription of DNA into RNA using the four ribonucleoside triphosphates as substrates. The polypeptide is DNA-directed RNA polymerase subunit beta (Rhizobium etli (strain ATCC 51251 / DSM 11541 / JCM 21823 / NBRC 15573 / CFN 42)).